Here is a 69-residue protein sequence, read N- to C-terminus: Light-harvesting protein B-1015 beta chain (69 aa).

Residues 2–21 (ADLKPSLTGLTEEEAKEFHG) lie on the Cytoplasmic side of the membrane. Residues His-20 and His-38 each contribute to the a bacteriochlorophyll site. Residues 22 to 44 (IFVTSTVLYLATAVIVHYLVWTA) traverse the membrane as a helical segment. The Periplasmic segment spans residues 45–56 (RPWIAPIPKGWV). A propeptide spanning residues 57 to 69 (NLEGVQSALSYLV) is cleaved from the precursor.

Belongs to the antenna complex beta subunit family. The core complex is formed by different alpha and beta chains, binding bacteriochlorophyll molecules, and arranged most probably in tetrameric structures disposed around the reaction center. The non-pigmented gamma chains may constitute additional components.

The protein resides in the cell inner membrane. Antenna complexes are light-harvesting systems, which transfer the excitation energy to the reaction centers. This is Light-harvesting protein B-1015 beta chain (pufB) from Blastochloris viridis (Rhodopseudomonas viridis).